The chain runs to 240 residues: UPF0309 protein in nagA 3'region (240 aa).

Residues 31–206 (IVKRLVQGGI…CAQIIEILHE (176 aa)) enclose the SIS domain.

The protein belongs to the UPF0309 family.

This is UPF0309 protein in nagA 3'region from Lysinibacillus sphaericus (Bacillus sphaericus).